An 89-amino-acid polypeptide reads, in one-letter code: Large ribosomal subunit protein bL31B (89 aa).

The protein belongs to the bacterial ribosomal protein bL31 family. Type B subfamily. As to quaternary structure, part of the 50S ribosomal subunit.

The polypeptide is Large ribosomal subunit protein bL31B (Corynebacterium urealyticum (strain ATCC 43042 / DSM 7109)).